We begin with the raw amino-acid sequence, 799 residues long: Lon protease 4 (799 aa).

The Lon N-terminal domain maps to 15-204; the sequence is FPLLPLRTGV…RVAGLLAEAS (190 aa). An ATP-binding site is contributed by 356-363; it reads GPPGVGKT. The region spanning 595 to 776 is the Lon proteolytic domain; it reads TSVAGVATGL…SQVIAAALEE (182 aa). Catalysis depends on residues Ser-682 and Lys-725.

The protein belongs to the peptidase S16 family. In terms of assembly, homohexamer. Organized in a ring with a central cavity.

The protein localises to the cytoplasm. It carries out the reaction Hydrolysis of proteins in presence of ATP.. ATP-dependent serine protease that mediates the selective degradation of mutant and abnormal proteins as well as certain short-lived regulatory proteins. Required for cellular homeostasis and for survival from DNA damage and developmental changes induced by stress. Degrades polypeptides processively to yield small peptide fragments that are 5 to 10 amino acids long. Binds to DNA in a double-stranded, site-specific manner. The chain is Lon protease 4 from Sorangium cellulosum (strain So ce56) (Polyangium cellulosum (strain So ce56)).